The sequence spans 479 residues: Aspartyl/glutamyl-tRNA(Asn/Gln) amidotransferase subunit B (479 aa).

This sequence belongs to the GatB/GatE family. GatB subfamily. As to quaternary structure, heterotrimer of A, B and C subunits.

The enzyme catalyses L-glutamyl-tRNA(Gln) + L-glutamine + ATP + H2O = L-glutaminyl-tRNA(Gln) + L-glutamate + ADP + phosphate + H(+). It carries out the reaction L-aspartyl-tRNA(Asn) + L-glutamine + ATP + H2O = L-asparaginyl-tRNA(Asn) + L-glutamate + ADP + phosphate + 2 H(+). Its function is as follows. Allows the formation of correctly charged Asn-tRNA(Asn) or Gln-tRNA(Gln) through the transamidation of misacylated Asp-tRNA(Asn) or Glu-tRNA(Gln) in organisms which lack either or both of asparaginyl-tRNA or glutaminyl-tRNA synthetases. The reaction takes place in the presence of glutamine and ATP through an activated phospho-Asp-tRNA(Asn) or phospho-Glu-tRNA(Gln). This is Aspartyl/glutamyl-tRNA(Asn/Gln) amidotransferase subunit B from Streptococcus pyogenes serotype M5 (strain Manfredo).